Here is a 259-residue protein sequence, read N- to C-terminus: Bisphosphoglycerate mutase (259 aa).

The residue at position 2 (Ser-2) is an N-acetylserine. Residues 10–17, 23–24, Arg-62, 89–92, Arg-100, and 116–117 each bind substrate; these read RHGEGAWN, CS, ERHY, and RR. His-11 serves as the catalytic Tele-phosphohistidine intermediate. The active-site Proton donor/acceptor is Glu-89. Position 122 is a phosphothreonine (Thr-122). Residue 189–190 participates in substrate binding; the sequence is GN.

The protein belongs to the phosphoglycerate mutase family. BPG-dependent PGAM subfamily. In terms of assembly, homodimer.

It catalyses the reaction (2R)-3-phospho-glyceroyl phosphate = (2R)-2,3-bisphosphoglycerate + H(+). It carries out the reaction (2R)-2-phosphoglycerate = (2R)-3-phosphoglycerate. Its activity is regulated as follows. At alkaline pH BPGM favors the synthase reaction; however, at lower pH the phosphatase reaction is dominant. Inhibited by citrate. In terms of biological role, plays a major role in regulating hemoglobin oxygen affinity by controlling the levels of its allosteric effector 2,3-bisphosphoglycerate (2,3-BPG). Also exhibits mutase (EC 5.4.2.11) activity. The protein is Bisphosphoglycerate mutase (BPGM) of Bos taurus (Bovine).